A 192-amino-acid chain; its full sequence is Probable metallophosphoesterase MJ0623 (192 aa).

Asp-41, His-43, Asp-70, Asn-92, His-115, His-144, and His-146 together coordinate a divalent metal cation.

Belongs to the metallophosphoesterase superfamily. YfcE family. A divalent metal cation serves as cofactor.

In Methanocaldococcus jannaschii (strain ATCC 43067 / DSM 2661 / JAL-1 / JCM 10045 / NBRC 100440) (Methanococcus jannaschii), this protein is Probable metallophosphoesterase MJ0623.